The following is a 173-amino-acid chain: Crossover junction endodeoxyribonuclease RuvC (173 aa).

Catalysis depends on residues aspartate 8, glutamate 69, and aspartate 141. The Mg(2+) site is built by aspartate 8, glutamate 69, and aspartate 141.

The protein belongs to the RuvC family. As to quaternary structure, homodimer which binds Holliday junction (HJ) DNA. The HJ becomes 2-fold symmetrical on binding to RuvC with unstacked arms; it has a different conformation from HJ DNA in complex with RuvA. In the full resolvosome a probable DNA-RuvA(4)-RuvB(12)-RuvC(2) complex forms which resolves the HJ. It depends on Mg(2+) as a cofactor.

Its subcellular location is the cytoplasm. It catalyses the reaction Endonucleolytic cleavage at a junction such as a reciprocal single-stranded crossover between two homologous DNA duplexes (Holliday junction).. The RuvA-RuvB-RuvC complex processes Holliday junction (HJ) DNA during genetic recombination and DNA repair. Endonuclease that resolves HJ intermediates. Cleaves cruciform DNA by making single-stranded nicks across the HJ at symmetrical positions within the homologous arms, yielding a 5'-phosphate and a 3'-hydroxyl group; requires a central core of homology in the junction. The consensus cleavage sequence is 5'-(A/T)TT(C/G)-3'. Cleavage occurs on the 3'-side of the TT dinucleotide at the point of strand exchange. HJ branch migration catalyzed by RuvA-RuvB allows RuvC to scan DNA until it finds its consensus sequence, where it cleaves and resolves the cruciform DNA. The sequence is that of Crossover junction endodeoxyribonuclease RuvC from Stenotrophomonas maltophilia (strain R551-3).